We begin with the raw amino-acid sequence, 390 residues long: Putative methylesterase 11, chloroplastic (390 aa).

Residues 1 to 46 constitute a chloroplast transit peptide; that stretch reads MGNLCSLFTPPKPVKKRKPITKRQSSIGASSSGSGLNSNRWNNRVR. 2 disordered regions span residues 1-52 and 94-119; these read MGNL…SSRR and QGSC…DPLL. Low complexity predominate over residues 25–48; that stretch reads SSIGASSSGSGLNSNRWNNRVRSS. Residues 94-104 are compositionally biased toward polar residues; sequence QGSCSKKNQLP. A compositionally biased stretch (low complexity) spans 105 to 114; it reads RSSSSRSRSS. The 105-residue stretch at 137-241 folds into the AB hydrolase-1 domain; it reads NHFVLVHGGS…KAVFLAAAML (105 aa). The Acyl-ester intermediate role is filled by Asp213. Active-site charge relay system residues include Asp339 and His367.

The protein belongs to the AB hydrolase superfamily. Methylesterase family.

It localises to the plastid. The protein localises to the chloroplast. Its function is as follows. Putative methylesterase. The sequence is that of Putative methylesterase 11, chloroplastic from Arabidopsis thaliana (Mouse-ear cress).